The sequence spans 495 residues: L-arabinose isomerase (495 aa).

Glu-305, Glu-332, His-349, and His-448 together coordinate Mn(2+).

Belongs to the arabinose isomerase family. Mn(2+) serves as cofactor.

It catalyses the reaction beta-L-arabinopyranose = L-ribulose. The protein operates within carbohydrate degradation; L-arabinose degradation via L-ribulose; D-xylulose 5-phosphate from L-arabinose (bacterial route): step 1/3. Functionally, catalyzes the conversion of L-arabinose to L-ribulose. The chain is L-arabinose isomerase from Actinobacillus succinogenes (strain ATCC 55618 / DSM 22257 / CCUG 43843 / 130Z).